We begin with the raw amino-acid sequence, 81 residues long: Acyl carrier protein (81 aa).

The 76-residue stretch at 2 to 77 (ASIEERVVDI…EAIDFIEKEK (76 aa)) folds into the Carrier domain. The residue at position 37 (serine 37) is an O-(pantetheine 4'-phosphoryl)serine.

It belongs to the acyl carrier protein (ACP) family. Post-translationally, 4'-phosphopantetheine is transferred from CoA to a specific serine of apo-ACP by AcpS. This modification is essential for activity because fatty acids are bound in thioester linkage to the sulfhydryl of the prosthetic group.

It is found in the cytoplasm. The protein operates within lipid metabolism; fatty acid biosynthesis. Its function is as follows. Carrier of the growing fatty acid chain in fatty acid biosynthesis. The chain is Acyl carrier protein from Rhodopirellula baltica (strain DSM 10527 / NCIMB 13988 / SH1).